The primary structure comprises 125 residues: Large ribosomal subunit protein bL20 (125 aa).

This sequence belongs to the bacterial ribosomal protein bL20 family.

Its function is as follows. Binds directly to 23S ribosomal RNA and is necessary for the in vitro assembly process of the 50S ribosomal subunit. It is not involved in the protein synthesizing functions of that subunit. The sequence is that of Large ribosomal subunit protein bL20 from Methylobacterium sp. (strain 4-46).